A 100-amino-acid chain; its full sequence is NADH-quinone oxidoreductase subunit K (100 aa).

A run of 3 helical transmembrane segments spans residues P3 to L23, I29 to F49, and F63 to I83.

The protein belongs to the complex I subunit 4L family. As to quaternary structure, NDH-1 is composed of 15 different subunits. Subunits NuoA, H, J, K, L, M, N constitute the membrane sector of the complex.

Its subcellular location is the cell membrane. The enzyme catalyses a quinone + NADH + 5 H(+)(in) = a quinol + NAD(+) + 4 H(+)(out). Functionally, NDH-1 shuttles electrons from NADH, via FMN and iron-sulfur (Fe-S) centers, to quinones in the respiratory chain. The immediate electron acceptor for the enzyme in this species is believed to be a menaquinone. Couples the redox reaction to proton translocation (for every two electrons transferred, four hydrogen ions are translocated across the cytoplasmic membrane), and thus conserves the redox energy in a proton gradient. This chain is NADH-quinone oxidoreductase subunit K, found in Deinococcus geothermalis (strain DSM 11300 / CIP 105573 / AG-3a).